The chain runs to 398 residues: 8-amino-7-oxononanoate synthase (398 aa).

R26 lines the substrate pocket. A pyridoxal 5'-phosphate-binding site is contributed by 113-114 (GF). A substrate-binding site is contributed by H138. Positions 181, 209, and 238 each coordinate pyridoxal 5'-phosphate. Position 241 is an N6-(pyridoxal phosphate)lysine (K241). Position 355 (T355) interacts with substrate.

This sequence belongs to the class-II pyridoxal-phosphate-dependent aminotransferase family. BioF subfamily. Homodimer. Requires pyridoxal 5'-phosphate as cofactor.

The enzyme catalyses 6-carboxyhexanoyl-[ACP] + L-alanine + H(+) = (8S)-8-amino-7-oxononanoate + holo-[ACP] + CO2. It functions in the pathway cofactor biosynthesis; biotin biosynthesis. In terms of biological role, catalyzes the decarboxylative condensation of pimeloyl-[acyl-carrier protein] and L-alanine to produce 8-amino-7-oxononanoate (AON), [acyl-carrier protein], and carbon dioxide. The protein is 8-amino-7-oxononanoate synthase of Aeromonas salmonicida (strain A449).